A 584-amino-acid chain; its full sequence is MALAAKERKLSRLGSKGSGGGGGGGSFGARGQRAPAGTQRRLFAAFFAFLFAGAVLFGAAHVIGASFRPVLKTAWPSATLNAVSSERGAQQAGMVSVDAVLPSVHIQHAVALPDHVLLMLRDGSLLPASGQFECLYSPVNSSQLRRQPLSVATLPDGPSLVHCPAGPSRVAVSLSLAQSVPVAPLQWDRLVYTALIDSKDNSTVVFAKGMNLRPGRLGVPSRYECVFGRDFSKPKLVVTSPVVSAAQEIFRCVTPVRIRRYLRMTTGGKNSVNNDDKPMLVSIRTKGRGSSTLPSIAQPEPLPRYNKHWRRKAHSMCVCTMLRNQARFLREWIIYHSRIGVQRWFIYDNNSDDGIEEVLNTMDSSRYNVTRYLWPWMKSQEAGFAHCALRARESCEWVGFIDIDEFLHFPGNQTLQDVLRNYSVKPRIGELRTACHSFGPSGRTKIPKKGVTTGYTCRLAAPERHKSIVRPDALNPSLINVVHHFHLKEGMKYVNIGQGMMLINHYKYQVWEVFKDKFSGRVATYVADWQDEENVGSRDRAPGLGTKPVEPEDWPRRFCEVYDNGLKDFVQKVFTDPHTGNLPW.

Residues 1-10 (MALAAKERKL) show a composition bias toward basic and acidic residues. The disordered stretch occupies residues 1-33 (MALAAKERKLSRLGSKGSGGGGGGGSFGARGQR). Over residues 16–28 (KGSGGGGGGGSFG) the composition is skewed to gly residues. A helical transmembrane segment spans residues 43–63 (FAAFFAFLFAGAVLFGAAHVI). The GT92 domain occupies 314-525 (HSMCVCTMLR…DKFSGRVATY (212 aa)).

Belongs to the glycosyltransferase 92 family.

The protein resides in the membrane. The chain is Glycosyltransferase family 92 protein Os08g0121900 from Oryza sativa subsp. japonica (Rice).